Here is a 205-residue protein sequence, read N- to C-terminus: MREKKEEDLQQVLNKVSEVGIDEVGRGAVFGPVFSAVVVLTEKNKFILKQFGVKDSKKLTPKKRKLLLPKILLLSSDYGIGQSSAREIDMLGIRVATELSMIRALKKLKEKPSEIIVDGPLLLRPWKGIQKNIVSGDSKITAIASASIVAKVARDNLMERLEKKYSGYLIFKNKGYGTREHFSNIKKNGITNLHRKSFLNQSDLI.

Residues 16 to 205 form the RNase H type-2 domain; it reads VSEVGIDEVG…KSFLNQSDLI (190 aa). A divalent metal cation-binding residues include aspartate 22, glutamate 23, and aspartate 118.

Belongs to the RNase HII family. Mn(2+) is required as a cofactor. The cofactor is Mg(2+).

The protein localises to the cytoplasm. It catalyses the reaction Endonucleolytic cleavage to 5'-phosphomonoester.. Endonuclease that specifically degrades the RNA of RNA-DNA hybrids. This is Ribonuclease HII from Prochlorococcus marinus (strain MIT 9312).